Here is a 318-residue protein sequence, read N- to C-terminus: Sensor histidine kinase NatK (318 aa).

The next 3 helical transmembrane spans lie at 4–24, 27–47, and 72–82; these read LFQC…AAAF, STAA…LYIW, and VGVVLIGTDIM. The 187-residue stretch at 132–318 folds into the Histidine kinase domain; the sequence is RNHDTMKHIT…RLEIKIPFQK (187 aa). Phosphohistidine; by autocatalysis is present on His134.

It is found in the cell membrane. It carries out the reaction ATP + protein L-histidine = ADP + protein N-phospho-L-histidine.. Functionally, member of the two-component regulatory system NatK/NatR that positively regulates the expression of the natAB operon. Potentially phosphorylates NatR. The protein is Sensor histidine kinase NatK of Bacillus subtilis (strain 168).